A 150-amino-acid polypeptide reads, in one-letter code: Protein ORF35 (150 aa).

This is Protein ORF35 (ORF35) from Homo sapiens (Human).